The chain runs to 772 residues: A type blood N-acetyl-alpha-D-galactosamine deacetylase (772 aa).

An N-terminal signal peptide occupies residues 1–27 (MRNRRKAVSLLTGLLVTAQLFPTAALA). Substrate is bound by residues S87 and H123. Residue D126 participates in a divalent metal cation binding. Residues 180 to 402 (WSKPTSDAER…WRIGYAENSF (223 aa)) form a deacetylase activity region. Y236 is a binding site for substrate. H278 is a binding site for a divalent metal cation. An F5/8 type C domain is found at 494–605 (SDDLEIAVVE…KDLVASGSDW (112 aa)). The CBM32 carbohydrate-binding domain stretch occupies residues 502 to 765 (VENPYTLIPQ…VCVSPVVDFD (264 aa)). Residues 515 to 772 (TATATSVYGG…DFDYFSYVGE (258 aa)) are not required for activity on soluble substrates.

It depends on a divalent metal cation as a cofactor.

The enzyme catalyses an N-acetyl-alpha-D-galactosaminyl-(1-&gt;3)-[alpha-L-fucosyl-(1-&gt;2)]-beta-D-galactosyl derivative + H2O = an alpha-D-galactosaminyl-(1-&gt;3)-[alpha-L-fucosyl-(1-&gt;2)]-beta-D-galactosyl derivative + acetate. Its activity is regulated as follows. Inhibited by EDTA. One of an enzyme pair that work together to convert the A antigen to the H antigen of the O blood type, which together release galactosamine. Catalyzes the first step in the conversion, generating the substrate for the subsequent enzyme (FpGalNase, AC P0DTR5). Works on many different A antigen subtypes. Glu-90 probably activates a nucleophilic water molecule to start the deacetylation reaction. The sequence is that of A type blood N-acetyl-alpha-D-galactosamine deacetylase from Flavonifractor plautii (Fusobacterium plautii).